Reading from the N-terminus, the 219-residue chain is DnaJ homolog subfamily C member 30, mitochondrial (219 aa).

Residues 1–38 (MAAARCLGWTLSPLWRWWQVRGLPPSSATGLCSRGRTY) constitute a mitochondrion transit peptide. The 66-residue stretch at 42–107 (ALYELLGVPS…ILRRKYDRGL (66 aa)) folds into the J domain. The interval 109-148 (SDQDLRGPGVKPSKTPVADPAPPRPPPYTPRAPGGSRASP) is disordered. Residues 127–138 (DPAPPRPPPYTP) show a composition bias toward pro residues. The chain crosses the membrane as a helical span at residues 202–218 (ATFFVVLFLIFVFVGFR).

Associates with the ATP synthase complex. Interacts with MT-ATP6; interaction is direct. Interacts with ATP5MC2; interaction is direct. As to expression, in brain, expressed in gray matter structures.

It localises to the mitochondrion inner membrane. In terms of biological role, mitochondrial protein enriched in neurons that acts as a regulator of mitochondrial respiration. Associates with the ATP synthase complex and facilitates ATP synthesis. May be a chaperone protein involved in the turnover of the subunits of mitochondrial complex I N-module. It facilitates the degradation of N-module subunits damaged by oxidative stress, and contributes to complex I functional efficiency. The polypeptide is DnaJ homolog subfamily C member 30, mitochondrial (Mus musculus (Mouse)).